The following is a 178-amino-acid chain: UPF0215 protein STK_03040 (178 aa).

The protein belongs to the UPF0215 family.

In Sulfurisphaera tokodaii (strain DSM 16993 / JCM 10545 / NBRC 100140 / 7) (Sulfolobus tokodaii), this protein is UPF0215 protein STK_03040.